Here is a 566-residue protein sequence, read N- to C-terminus: Serine/threonine-protein kinase haspin homolog (566 aa).

Positions 248 to 566 (LLNTKKIGEG…HCANYLFNLN (319 aa)) constitute a Protein kinase domain. Residues 254 to 262 (IGEGAYGEV), Lys-282, 377 to 382 (KFAGSD), 418 to 423 (DLHLGN), and 456 to 458 (DYT) contribute to the ATP site. The active-site Proton acceptor is Asp-418.

It belongs to the protein kinase superfamily. Ser/Thr protein kinase family. Haspin subfamily. Interacts with pds5 and vtd. It depends on Mg(2+) as a cofactor.

It is found in the nucleus lamina. It localises to the chromosome. Its subcellular location is the cytoplasm. The protein resides in the cytoskeleton. The protein localises to the spindle. The catalysed reaction is L-seryl-[protein] + ATP = O-phospho-L-seryl-[protein] + ADP + H(+). It carries out the reaction L-threonyl-[protein] + ATP = O-phospho-L-threonyl-[protein] + ADP + H(+). In terms of biological role, serine/threonine-protein kinase that phosphorylates histone H3 at 'Thr-4' (H3T3ph) during mitosis and interphase. Function is essential for chromosome organization during mitosis and genome organization in interphase cells, thus playing a functional role in gene regulation. During mitosis, may act through H3T3ph to both position and modulate activation of AURKB and other components of the chromosomal passenger complex (CPC) at centromeres to ensure proper chromatid cohesion, metaphase alignment and normal progression through the cell cycle. During interphase, associates with the cohesion complex and mediates pds5 binding to chromatin to ensure correct sister chromatid cohesion, chromatin organization, and also functions with Pds5-cohesin to modify Polycomb-dependent homeotic transformations. Function during interphase is required for insulator activity, nuclear compaction, heterochromatin-induced position-effect variegation and PcG-mediated pairing-sensitive silencing. This Drosophila melanogaster (Fruit fly) protein is Serine/threonine-protein kinase haspin homolog.